The following is a 349-amino-acid chain: N-acetyltaurine hydrolase (349 aa).

Residues His26, His28, Glu169, His201, His230, and Asp298 each contribute to the a divalent metal cation site.

The protein belongs to the metallo-dependent hydrolases superfamily. Phosphotriesterase family. A divalent metal cation serves as cofactor.

The protein resides in the cytoplasm. It is found in the cytosol. It catalyses the reaction N-acetyltaurine + H2O = taurine + acetate. The catalysed reaction is N-propanoyltaurine + H2O = propanoate + taurine. The enzyme catalyses N-acetyl-L-methionine + H2O = L-methionine + acetate. It carries out the reaction N-acetyl-L-isoleucine + H2O = L-isoleucine + acetate. It catalyses the reaction N-acetyl-L-leucine + H2O = L-leucine + acetate. The catalysed reaction is N-acetyl-L-valine + H2O = L-valine + acetate. N-acetyltaurine hydrolase that catalyzes the hydrolysis of N-acetyltaurine into taurine and acetate. PTER also acts on other N-acetyl amino acids (Met, Ile, Leu, Val) and N-propionyltaurine, but at lower rates. The chain is N-acetyltaurine hydrolase (pter) from Danio rerio (Zebrafish).